Reading from the N-terminus, the 710-residue chain is Solute carrier organic anion transporter family member 3A1 (710 aa).

N-acetylmethionine is present on Met-1. The segment at Met-1 to Arg-25 is disordered. Topologically, residues Met-1–Lys-40 are cytoplasmic. A helical transmembrane segment spans residues Ile-41–Leu-60. Residues Val-61 to Gly-79 lie on the Extracellular side of the membrane. Residues Val-80–Gly-100 form a helical membrane-spanning segment. Residues Ala-101–Pro-106 lie on the Cytoplasmic side of the membrane. Residues Arg-107 to His-131 form a helical membrane-spanning segment. The Extracellular segment spans residues Gln-132–Asn-174. An N-linked (GlcNAc...) asparagine glycan is attached at Asn-153. A helical membrane pass occupies residues Met-175–Asp-203. The Cytoplasmic portion of the chain corresponds to Asp-204–Leu-222. The chain crosses the membrane as a helical span at residues Val-223–Ala-243. Topologically, residues Val-244–Ile-261 are extracellular. Residues Gly-262–Pro-286 form a helical membrane-spanning segment. Residues Gln-287 to His-344 lie on the Cytoplasmic side of the membrane. The helical transmembrane segment at Leu-345 to Ala-366 threads the bilayer. At Gly-367–Ser-386 the chain is on the extracellular side. N-linked (GlcNAc...) asparagine glycosylation is present at Asn-381. Residues Ala-387–Val-410 form a helical membrane-spanning segment. Residues Lys-411–Ser-414 are Cytoplasmic-facing. A helical transmembrane segment spans residues Leu-415–Phe-438. At Leu-439–Phe-539 the chain is on the extracellular side. Residue Asn-457 is glycosylated (N-linked (GlcNAc...) asparagine). The Kazal-like domain occupies Leu-465–Met-513. 3 disulfides stabilise this stretch: Cys-471-Cys-501, Cys-477-Cys-497, and Cys-486-Cys-511. N-linked (GlcNAc...) asparagine glycans are attached at residues Asn-502, Asn-505, and Asn-519. The helical transmembrane segment at Leu-540–Ile-562 threads the bilayer. The Cytoplasmic segment spans residues Arg-563 to Ser-571. The helical transmembrane segment at Tyr-572 to Ile-597 threads the bilayer. Topologically, residues Asp-598–Ala-630 are extracellular. The helical transmembrane segment at Ile-631 to Leu-648 threads the bilayer. Over Arg-649 to Asn-705 the chain is Cytoplasmic.

This sequence belongs to the organo anion transporter (TC 2.A.60) family.

The protein resides in the basolateral cell membrane. The protein localises to the apical cell membrane. Its subcellular location is the basal cell membrane. The enzyme catalyses L-thyroxine(out) = L-thyroxine(in). It catalyses the reaction prostaglandin E1(out) = prostaglandin E1(in). It carries out the reaction prostaglandin E2(out) = prostaglandin E2(in). The catalysed reaction is prostaglandin F2alpha(out) = prostaglandin F2alpha(in). The enzyme catalyses (5Z,8Z,11Z,14Z)-eicosatetraenoate(out) = (5Z,8Z,11Z,14Z)-eicosatetraenoate(in). It catalyses the reaction taurocholate(out) = taurocholate(in). It carries out the reaction glycocholate(out) = glycocholate(in). The catalysed reaction is estrone 3-sulfate(out) = estrone 3-sulfate(in). The enzyme catalyses argipressin(out) = argipressin(in). In terms of biological role, putative organic anion antiporter with apparent broad substrate specificity. Recognizes various substrates including thyroid hormone L-thyroxine, prostanoids such as prostaglandin E1 and E2, bile acids such as taurocholate, glycolate and glycochenodeoxycholate and peptide hormones such as L-arginine vasopressin, likely operating in a tissue-specific manner. The transport mechanism, its electrogenicity and potential tissue-specific counterions remain to be elucidated. This Bos taurus (Bovine) protein is Solute carrier organic anion transporter family member 3A1 (SLCO3A1).